Consider the following 298-residue polypeptide: Glutamyl-Q tRNA(Asp) synthetase (298 aa).

Residues 8–12 and glutamate 44 contribute to the L-glutamate site; that span reads RFAPS. The 'HIGH' region signature appears at 11 to 21; it reads PSPTGPLHFGS. Zn(2+) is bound by residues cysteine 100, cysteine 102, tyrosine 123, and cysteine 127. Residues tyrosine 183 and arginine 201 each coordinate L-glutamate. Residues 239–243 carry the 'KMSKS' region motif; sequence KLSKQ. Lysine 242 lines the ATP pocket.

Belongs to the class-I aminoacyl-tRNA synthetase family. GluQ subfamily. It depends on Zn(2+) as a cofactor.

Catalyzes the tRNA-independent activation of glutamate in presence of ATP and the subsequent transfer of glutamate onto a tRNA(Asp). Glutamate is transferred on the 2-amino-5-(4,5-dihydroxy-2-cyclopenten-1-yl) moiety of the queuosine in the wobble position of the QUC anticodon. The polypeptide is Glutamyl-Q tRNA(Asp) synthetase (Burkholderia orbicola (strain AU 1054)).